A 244-amino-acid polypeptide reads, in one-letter code: Transforming protein v-Fos/v-Fox (244 aa).

Positions 1-236 (DSLSYYHSPA…LFPASSGHSG (236 aa)) are transforming protein v-Fos. Positions 113 to 176 (EVKRRIRRER…EKLEFILAAH (64 aa)) constitute a bZIP domain. Residues 115 to 135 (KRRIRRERNKMAAAKCRNRRR) form a basic motif region. A leucine-zipper region spans residues 141–169 (LQAETDQLEDEKSALQTEIANLLKEKEKL). A transforming protein v-Fox region spans residues 237-244 (FISMAGWQ).

The protein belongs to the bZIP family. Fos subfamily.

It localises to the host nucleus. The protein is Transforming protein v-Fos/v-Fox (FOS-FOX) of Mus musculus (Mouse).